Here is a 288-residue protein sequence, read N- to C-terminus: Syntaxin-1A (288 aa).

Residues 1–13 (MKDRTQELRTAKD) show a composition bias toward basic and acidic residues. The tract at residues 1-20 (MKDRTQELRTAKDSDDDDDV) is disordered. At 1-265 (MKDRTQELRT…KYQSKARRKK (265 aa)) the chain is on the cytoplasmic side. Phosphoserine occurs at positions 14, 64, and 95. Positions 68-109 (DEKTKEELEELMSDIKKTANKVRSKLKSIEQSIEQEEGLNRS) form a coiled coil. The residue at position 188 (serine 188) is a Phosphoserine; by DAPK1. Positions 192–254 (LSEIETRHSE…ERAVSDTKKA (63 aa)) constitute a t-SNARE coiled-coil homology domain. Glycyl lysine isopeptide (Lys-Gly) (interchain with G-Cter in SUMO) cross-links involve residues lysine 252, lysine 253, and lysine 256. A helical; Anchor for type IV membrane protein transmembrane segment spans residues 266 to 288 (IMIVICCVVLGIVIASTFGGIFG).

The protein belongs to the syntaxin family. As to quaternary structure, part of the SNARE core complex containing SNAP25, VAMP2 and STX1A; this complex constitutes the basic catalytic machinery of the complex neurotransmitter release apparatus. The SNARE complex interacts with CPLX1. Interacts with STXBP1. The interaction with STXBP1 promotes assembly of the SNARE complex. Interacts (via C-terminus) with KCNB1 (via C-terminus); the interaction increases in a calcium-dependent manner and induces a pore-independent enhancement of exocytosis in neuroendocrine cells, chromaffin cells, pancreatic beta cells and from the soma of dorsal root ganglia (DRG) neurons. Interacts with SYTL4. Interacts with STXBP6. Interacts with PLCL1 (via C2 domain). Interacts with OTOF. Interacts with LGI3. Interacts (via the H3 domain) with SLC6A4 (via the N-terminus); this interaction regulates SLC4A6 channel conductance in thalamocortical neurons. Interacts with SYT6 and SYT8; the interaction is Ca(2+)-dependent. Interacts with VAMP8. Interacts with SNAP23. Interacts with VAPA and SYBU. Interacts with PRRT2. Interacts with SEPT8. Interacts with STXBP5L. Interacts with synaptotagmin-1/SYT1. Interacts with SEPTIN5; in the cerebellar cortex. Interacts with SEPTIN4; in the striatum. Phosphorylated by CK2. Phosphorylation at Ser-188 by DAPK1 significantly decreases its interaction with STXBP1. In terms of processing, sumoylated, sumoylation is required for regulation of synaptic vesicle endocytosis. Post-translationally, (Microbial infection) Targeted and hydrolyzed by C.botulinum neurotoxin type C (BoNT/C) which inhibits neurotransmitter release. Probably hydrolyzes the 253-Lys-|-Ala-254 bond.

Its subcellular location is the cytoplasmic vesicle. The protein resides in the secretory vesicle. It localises to the synaptic vesicle membrane. The protein localises to the synapse. It is found in the synaptosome. Its subcellular location is the cell membrane. In terms of biological role, plays an essential role in hormone and neurotransmitter calcium-dependent exocytosis and endocytosis. Part of the SNARE (Soluble NSF Attachment Receptor) complex composed of SNAP25, STX1A and VAMP2 which mediates the fusion of synaptic vesicles with the presynaptic plasma membrane. STX1A and SNAP25 are localized on the plasma membrane while VAMP2 resides in synaptic vesicles. The pairing of the three SNAREs from the N-terminal SNARE motifs to the C-terminal anchors leads to the formation of the SNARE complex, which brings membranes into close proximity and results in final fusion. Participates in the calcium-dependent regulation of acrosomal exocytosis in sperm. Also plays an important role in the exocytosis of hormones such as insulin or glucagon-like peptide 1 (GLP-1). The protein is Syntaxin-1A (STX1A) of Bos taurus (Bovine).